A 250-amino-acid chain; its full sequence is ATP synthase subunit a (250 aa).

Transmembrane regions (helical) follow at residues phenylalanine 26–leucine 46, phenylalanine 84–valine 104, isoleucine 114–tyrosine 134, leucine 143–isoleucine 163, phenylalanine 193–isoleucine 213, and valine 216–leucine 236.

The protein belongs to the ATPase A chain family. F-type ATPases have 2 components, CF(1) - the catalytic core - and CF(0) - the membrane proton channel. CF(1) has five subunits: alpha(3), beta(3), gamma(1), delta(1), epsilon(1). CF(0) has three main subunits: a(1), b(2) and c(9-12). The alpha and beta chains form an alternating ring which encloses part of the gamma chain. CF(1) is attached to CF(0) by a central stalk formed by the gamma and epsilon chains, while a peripheral stalk is formed by the delta and b chains.

The protein resides in the cell inner membrane. In terms of biological role, key component of the proton channel; it plays a direct role in the translocation of protons across the membrane. In Sinorhizobium medicae (strain WSM419) (Ensifer medicae), this protein is ATP synthase subunit a.